A 514-amino-acid polypeptide reads, in one-letter code: ATP synthase subunit alpha (514 aa).

An ATP-binding site is contributed by 170–177; it reads GDRQIGKT.

Belongs to the ATPase alpha/beta chains family. In terms of assembly, F-type ATPases have 2 components, CF(1) - the catalytic core - and CF(0) - the membrane proton channel. CF(1) has five subunits: alpha(3), beta(3), gamma(1), delta(1), epsilon(1). CF(0) has three main subunits: a(1), b(2) and c(9-12). The alpha and beta chains form an alternating ring which encloses part of the gamma chain. CF(1) is attached to CF(0) by a central stalk formed by the gamma and epsilon chains, while a peripheral stalk is formed by the delta and b chains.

The protein resides in the cell inner membrane. It catalyses the reaction ATP + H2O + 4 H(+)(in) = ADP + phosphate + 5 H(+)(out). Its function is as follows. Produces ATP from ADP in the presence of a proton gradient across the membrane. The alpha chain is a regulatory subunit. The sequence is that of ATP synthase subunit alpha from Pseudomonas aeruginosa (strain LESB58).